A 51-amino-acid chain; its full sequence is MKQQKAMLIALIVICLTVIVTALVTRKDLCEVRIRTGQTEVAVFTAYEPEE.

The chain crosses the membrane as a helical span at residues 5-25; the sequence is KAMLIALIVICLTVIVTALVT.

The protein belongs to the Hok/Gef family.

The protein resides in the cell inner membrane. In terms of biological role, toxic component of a type I toxin-antitoxin (TA) system. When overexpressed kills cells within minutes; causes collapse of the transmembrane potential and arrest of respiration. Its toxic effect is probably neutralized by an antisense antitoxin Sok RNA. This Escherichia coli O157:H7 protein is Protein HokD (hokD).